We begin with the raw amino-acid sequence, 250 residues long: Flavin-dependent thymidylate synthase (250 aa).

Positions 7-233 (LRVQLIAKTD…PSIFGDFDIA (227 aa)) constitute a ThyX domain. FAD-binding positions include Ser-71, 95-97 (RHR), and Gln-103. DUMP is bound by residues 92-95 (ELIR), 103-107 (QLSQR), and Arg-172. The short motif at 95-105 (RHRHFSYSQLS) is the ThyX motif element. Residues 188–190 (NYR) and His-194 each bind FAD. Residue Arg-199 coordinates dUMP. The Involved in ionization of N3 of dUMP, leading to its activation role is filled by Arg-199.

Belongs to the thymidylate synthase ThyX family. In terms of assembly, homotetramer. FAD is required as a cofactor.

The catalysed reaction is dUMP + (6R)-5,10-methylene-5,6,7,8-tetrahydrofolate + NADPH + H(+) = dTMP + (6S)-5,6,7,8-tetrahydrofolate + NADP(+). The protein operates within pyrimidine metabolism; dTTP biosynthesis. Catalyzes the reductive methylation of 2'-deoxyuridine-5'-monophosphate (dUMP) to 2'-deoxythymidine-5'-monophosphate (dTMP) while utilizing 5,10-methylenetetrahydrofolate (mTHF) as the methyl donor, and NADPH and FADH(2) as the reductant. This Mycobacteroides abscessus (strain ATCC 19977 / DSM 44196 / CCUG 20993 / CIP 104536 / JCM 13569 / NCTC 13031 / TMC 1543 / L948) (Mycobacterium abscessus) protein is Flavin-dependent thymidylate synthase.